The primary structure comprises 288 residues: Quinate/shikimate dehydrogenase (288 aa).

Residues Lys-71 and Asp-107 each coordinate substrate. NAD(+)-binding positions include 132–135, 155–158, Lys-205, 232–235, and Gly-255; these read AGGA, NRRD, and CVYN.

Belongs to the shikimate dehydrogenase family. In terms of assembly, homodimer.

The catalysed reaction is L-quinate + NAD(+) = 3-dehydroquinate + NADH + H(+). It catalyses the reaction L-quinate + NADP(+) = 3-dehydroquinate + NADPH + H(+). It carries out the reaction shikimate + NADP(+) = 3-dehydroshikimate + NADPH + H(+). The enzyme catalyses shikimate + NAD(+) = 3-dehydroshikimate + NADH + H(+). Its pathway is metabolic intermediate biosynthesis; chorismate biosynthesis; chorismate from D-erythrose 4-phosphate and phosphoenolpyruvate: step 4/7. Its function is as follows. The actual biological function of YdiB remains unclear, nor is it known whether 3-dehydroshikimate or quinate represents the natural substrate. Catalyzes the reversible NAD-dependent reduction of both 3-dehydroshikimate (DHSA) and 3-dehydroquinate to yield shikimate (SA) and quinate, respectively. It can use both NAD or NADP for catalysis, however it has higher catalytic efficiency with NAD. In Escherichia coli O157:H7, this protein is Quinate/shikimate dehydrogenase.